The primary structure comprises 1146 residues: Large proline-rich protein BAG6 (1146 aa).

An N-acetylmethionine modification is found at methionine 1. A Ubiquitin-like domain is found at 17 to 92 (LEVLVKTLDS…HLVERAPPQT (76 aa)). 5 disordered regions span residues 87 to 128 (RAPP…HDRN), 186 to 268 (RGGT…HPSP), 381 to 436 (TMTG…TSHP), 457 to 525 (QDSG…QGAG), and 555 to 618 (PGMA…SAAD). At serine 96 the chain carries Phosphoserine. Positions 96-108 (SGASSGTGSASAT) are enriched in low complexity. A compositionally biased stretch (gly residues) spans 109-122 (HGGGPLPGTRGPGA). Threonine 117 is subject to Phosphothreonine. A compositionally biased stretch (polar residues) spans 208–217 (VALNSQTSEP). A run of 2 repeats spans residues 236-265 (RPPT…APNH) and 410-438 (PSSA…HPRV). The 4 X 29 AA approximate repeats stretch occupies residues 236–650 (RPPTQTPELP…LASPTITVAV (415 aa)). The span at 239–257 (TQTPELPPSGPAPAGPAPA) shows a compositional bias: pro residues. A compositionally biased stretch (low complexity) spans 394–413 (GAEAASPGSGQASSLPPSSA). Composition is skewed to pro residues over residues 422-433 (APPPGPAPPPAT) and 502-515 (PTPP…PGGP). 2 stretches are compositionally biased toward low complexity: residues 555-573 (PGMA…AQAP) and 583-601 (PATA…TAGP). 2 consecutive repeat copies span residues 589 to 616 (SAGT…QPSA) and 622 to 650 (SQLL…TVAV). Residues 603 to 614 (PGGPAQPPPPQP) show a composition bias toward pro residues. Disordered regions lie at residues 666–711 (ASQA…ESLP) and 961–1146 (PQAL…ADDP). Positions 670–694 (APPPPPPPPPPPPAPEQQTTPPPGS) are enriched in pro residues. Basic and acidic residues predominate over residues 977-986 (TSPEPQREDA). Serine 978 and serine 987 each carry phosphoserine. The segment covering 1021 to 1034 (AEPWAAAVPPEWVP) has biased composition (low complexity). Residues 1024 to 1054 (WAAAVPPEWVPIIQQDIQSQRKVKPQPPLSD) form a required for interaction with GET4 region. A Nuclear localization site motif is present at residues 1026-1068 (AAVPPEWVPIIQQDIQSQRKVKPQPPLSDAYLSGMPAKRRKTM). The segment at 1036 to 1146 (IQQDIQSQRK…NAHRAFADDP (111 aa)) is sufficient for the delivery of client proteins to the endoplasmic reticulum. Phosphothreonine is present on threonine 1067. Residues 1072 to 1129 (GPQLLLSEAVSRAAKAAGARPLTSPESLSRDLEAPEVQESYRQQLRSDIQKRLQEDPN) are BAG-similar domain, required and sufficient for interaction with UBL4A. Residues 1080-1090 (AVSRAAKAAGA) show a composition bias toward low complexity. Serine 1095 and serine 1131 each carry phosphoserine.

As to quaternary structure, component of the BAG6/BAT3 complex, also named BAT3 complex, at least composed of BAG6, UBL4A and GET4/TRC35. Interacts with GET4; the interaction is direct and localizes BAG6 in the cytosol. Interacts with UBL4A; the interaction is direct and required for UBL4A protein stability. Interacts with AIFM1. Interacts with HSPA2. Interacts with CTCFL. Interacts with p300/EP300. Interacts (via ubiquitin-like domain) with RNF126; required for BAG6-dependent ubiquitination of proteins mislocalized to the cytosol. Interacts (via ubiquitin-like domain) with SGTA; SGTA competes with RNF126 by binding the same region of BAG6, thereby promoting deubiquitination of BAG6-target proteins and rescuing them from degradation. Interacts with ricin A chain. Interacts with VCP and AMFR; both form the VCP/p97-AMFR/gp78 complex. Interacts with SYVN1. Interacts with USP13; the interaction is direct and may mediate UBL4A deubiquitination. Interacts with ZFAND2B. Interacts with KPNA2. Interacts with UBQLN4. Post-translationally, ricin can induce a cleavage by the caspase CASP3. The released C-terminal peptide induces apoptosis.

The protein resides in the cytoplasm. It is found in the cytosol. The protein localises to the nucleus. It localises to the secreted. Its subcellular location is the extracellular exosome. Functionally, ATP-independent molecular chaperone preventing the aggregation of misfolded and hydrophobic patches-containing proteins. Functions as part of a cytosolic protein quality control complex, the BAG6/BAT3 complex, which maintains these client proteins in a soluble state and participates in their proper delivery to the endoplasmic reticulum or alternatively can promote their sorting to the proteasome where they undergo degradation. The BAG6/BAT3 complex is involved in the post-translational delivery of tail-anchored/type II transmembrane proteins to the endoplasmic reticulum membrane. Recruited to ribosomes, it interacts with the transmembrane region of newly synthesized tail-anchored proteins and together with SGTA and ASNA1 mediates their delivery to the endoplasmic reticulum. Client proteins that cannot be properly delivered to the endoplasmic reticulum are ubiquitinated by RNF126, an E3 ubiquitin-protein ligase associated with BAG6 and are sorted to the proteasome. SGTA which prevents the recruitment of RNF126 to BAG6 may negatively regulate the ubiquitination and the proteasomal degradation of client proteins. Similarly, the BAG6/BAT3 complex also functions as a sorting platform for proteins of the secretory pathway that are mislocalized to the cytosol either delivering them to the proteasome for degradation or to the endoplasmic reticulum. The BAG6/BAT3 complex also plays a role in the endoplasmic reticulum-associated degradation (ERAD), a quality control mechanism that eliminates unwanted proteins of the endoplasmic reticulum through their retrotranslocation to the cytosol and their targeting to the proteasome. It maintains these retrotranslocated proteins in an unfolded yet soluble state condition in the cytosol to ensure their proper delivery to the proteasome. BAG6 is also required for selective ubiquitin-mediated degradation of defective nascent chain polypeptides by the proteasome. In this context, it may participate in the production of antigenic peptides and play a role in antigen presentation in immune response. BAG6 is also involved in endoplasmic reticulum stress-induced pre-emptive quality control, a mechanism that selectively attenuates the translocation of newly synthesized proteins into the endoplasmic reticulum and reroutes them to the cytosol for proteasomal degradation. BAG6 may ensure the proper degradation of these proteins and thereby protects the endoplasmic reticulum from protein overload upon stress. By inhibiting the polyubiquitination and subsequent proteasomal degradation of HSPA2 it may also play a role in the assembly of the synaptonemal complex during spermatogenesis. Also positively regulates apoptosis by interacting with and stabilizing the proapoptotic factor AIFM1. By controlling the steady-state expression of the IGF1R receptor, indirectly regulates the insulin-like growth factor receptor signaling pathway. Involved in DNA damage-induced apoptosis: following DNA damage, accumulates in the nucleus and forms a complex with p300/EP300, enhancing p300/EP300-mediated p53/TP53 acetylation leading to increase p53/TP53 transcriptional activity. When nuclear, may also act as a component of some chromatin regulator complex that regulates histone 3 'Lys-4' dimethylation (H3K4me2). In terms of biological role, released extracellularly via exosomes, it is a ligand of the natural killer/NK cells receptor NCR3 and stimulates NK cells cytotoxicity. It may thereby trigger NK cells cytotoxicity against neighboring tumor cells and immature myeloid dendritic cells (DC). Its function is as follows. May mediate ricin-induced apoptosis. The protein is Large proline-rich protein BAG6 of Rattus norvegicus (Rat).